Consider the following 326-residue polypeptide: Thiazole synthase (326 aa).

The Schiff-base intermediate with DXP role is filled by lysine 168. 1-deoxy-D-xylulose 5-phosphate is bound by residues glycine 229, 255-256 (AG), and 277-278 (NT).

Belongs to the ThiG family. Homotetramer. Forms heterodimers with either ThiH or ThiS.

Its subcellular location is the cytoplasm. The enzyme catalyses [ThiS sulfur-carrier protein]-C-terminal-Gly-aminoethanethioate + 2-iminoacetate + 1-deoxy-D-xylulose 5-phosphate = [ThiS sulfur-carrier protein]-C-terminal Gly-Gly + 2-[(2R,5Z)-2-carboxy-4-methylthiazol-5(2H)-ylidene]ethyl phosphate + 2 H2O + H(+). It participates in cofactor biosynthesis; thiamine diphosphate biosynthesis. Catalyzes the rearrangement of 1-deoxy-D-xylulose 5-phosphate (DXP) to produce the thiazole phosphate moiety of thiamine. Sulfur is provided by the thiocarboxylate moiety of the carrier protein ThiS. In vitro, sulfur can be provided by H(2)S. In Magnetococcus marinus (strain ATCC BAA-1437 / JCM 17883 / MC-1), this protein is Thiazole synthase.